A 60-amino-acid polypeptide reads, in one-letter code: DNA-directed RNA polymerase subunit Rpo6 (60 aa).

It belongs to the archaeal Rpo6/eukaryotic RPB6 RNA polymerase subunit family. In terms of assembly, part of the RNA polymerase complex.

The protein localises to the cytoplasm. It catalyses the reaction RNA(n) + a ribonucleoside 5'-triphosphate = RNA(n+1) + diphosphate. DNA-dependent RNA polymerase (RNAP) catalyzes the transcription of DNA into RNA using the four ribonucleoside triphosphates as substrates. This chain is DNA-directed RNA polymerase subunit Rpo6, found in Picrophilus torridus (strain ATCC 700027 / DSM 9790 / JCM 10055 / NBRC 100828 / KAW 2/3).